A 280-amino-acid polypeptide reads, in one-letter code: 30 kDa immediate-early protein 2 (280 aa).

The segment at 36–164 (SEEEQGEEVE…KKSKRISELD (129 aa)) is disordered. Low complexity-rich tracts occupy residues 47–67 (RGAT…TSPT), 90–101 (SSSSSSCSSASD), and 132–147 (AASS…SSGG).

Functionally, activates the E1.7 promoter. This activation is augmented by the IE1 protein. It down-regulates the transcription of genes under the control of the major IE promoter. The polypeptide is 30 kDa immediate-early protein 2 (UL122) (Human cytomegalovirus (strain Towne) (HHV-5)).